The following is a 100-amino-acid chain: Urease subunit gamma (100 aa).

It belongs to the urease gamma subunit family. As to quaternary structure, heterotrimer of UreA (gamma), UreB (beta) and UreC (alpha) subunits. Three heterotrimers associate to form the active enzyme.

The protein localises to the cytoplasm. The enzyme catalyses urea + 2 H2O + H(+) = hydrogencarbonate + 2 NH4(+). Its pathway is nitrogen metabolism; urea degradation; CO(2) and NH(3) from urea (urease route): step 1/1. The polypeptide is Urease subunit gamma (Teredinibacter turnerae (strain ATCC 39867 / T7901)).